A 472-amino-acid polypeptide reads, in one-letter code: F420-non-reducing hydrogenase subunit A (472 aa).

Ni(2+)-binding residues include C61, C64, C442, and C445.

It belongs to the [NiFe]/[NiFeSe] hydrogenase large subunit family. In terms of assembly, the F420-non-reducing hydrogenase is composed of three subunits; MvhA, MvhD and MvhG. It forms a complex with the heterodisulfide reductase (hdr). The cofactor is Ni(2+).

Part of a complex that provides reducing equivalents for heterodisulfide reductase. In Methanothermobacter marburgensis (strain ATCC BAA-927 / DSM 2133 / JCM 14651 / NBRC 100331 / OCM 82 / Marburg) (Methanobacterium thermoautotrophicum), this protein is F420-non-reducing hydrogenase subunit A (mvhA).